Reading from the N-terminus, the 218-residue chain is Glutathione S-transferase Mu 6 (218 aa).

In terms of domain architecture, GST N-terminal spans Met1–Gly88. Residues Tyr7–Trp8, Trp46–Lys50, Asn59–Leu60, and Gln72–Ser73 contribute to the glutathione site. The 119-residue stretch at Thr90–Val208 folds into the GST C-terminal domain. Tyr116 lines the substrate pocket.

It belongs to the GST superfamily. Mu family. In terms of assembly, homodimer. As to expression, expressed in liver, stomach and small intestine. Not expressed in spleen, kidney, colon, heart, muscle, brain or lung.

The protein localises to the cytoplasm. It carries out the reaction RX + glutathione = an S-substituted glutathione + a halide anion + H(+). Its function is as follows. Conjugation of reduced glutathione to a wide number of exogenous and endogenous hydrophobic electrophiles. The protein is Glutathione S-transferase Mu 6 (Gstm6) of Mus musculus (Mouse).